A 418-amino-acid polypeptide reads, in one-letter code: Light-independent protochlorophyllide reductase subunit N (418 aa).

Positions 17, 42, and 103 each coordinate [4Fe-4S] cluster.

This sequence belongs to the BchN/ChlN family. As to quaternary structure, protochlorophyllide reductase is composed of three subunits; ChlL, ChlN and ChlB. Forms a heterotetramer of two ChlB and two ChlN subunits. Requires [4Fe-4S] cluster as cofactor.

It carries out the reaction chlorophyllide a + oxidized 2[4Fe-4S]-[ferredoxin] + 2 ADP + 2 phosphate = protochlorophyllide a + reduced 2[4Fe-4S]-[ferredoxin] + 2 ATP + 2 H2O. It functions in the pathway porphyrin-containing compound metabolism; chlorophyll biosynthesis (light-independent). Its function is as follows. Component of the dark-operative protochlorophyllide reductase (DPOR) that uses Mg-ATP and reduced ferredoxin to reduce ring D of protochlorophyllide (Pchlide) to form chlorophyllide a (Chlide). This reaction is light-independent. The NB-protein (ChlN-ChlB) is the catalytic component of the complex. This is Light-independent protochlorophyllide reductase subunit N from Prochlorococcus marinus (strain SARG / CCMP1375 / SS120).